The primary structure comprises 176 residues: Adenine phosphoribosyltransferase (176 aa).

The protein belongs to the purine/pyrimidine phosphoribosyltransferase family. Homodimer.

The protein localises to the cytoplasm. It catalyses the reaction AMP + diphosphate = 5-phospho-alpha-D-ribose 1-diphosphate + adenine. The protein operates within purine metabolism; AMP biosynthesis via salvage pathway; AMP from adenine: step 1/1. Catalyzes a salvage reaction resulting in the formation of AMP, that is energically less costly than de novo synthesis. This is Adenine phosphoribosyltransferase from Gluconacetobacter diazotrophicus (strain ATCC 49037 / DSM 5601 / CCUG 37298 / CIP 103539 / LMG 7603 / PAl5).